The following is a 162-amino-acid chain: Protein A49 (162 aa).

The protein belongs to the poxviridae A49 protein family.

This chain is Protein A49, found in Homo sapiens (Human).